The following is a 218-amino-acid chain: Elongation factor Ts (218 aa).

The involved in Mg(2+) ion dislocation from EF-Tu stretch occupies residues 82 to 85 (TDFV).

The protein belongs to the EF-Ts family.

The protein resides in the cytoplasm. Functionally, associates with the EF-Tu.GDP complex and induces the exchange of GDP to GTP. It remains bound to the aminoacyl-tRNA.EF-Tu.GTP complex up to the GTP hydrolysis stage on the ribosome. This Prochlorococcus marinus (strain MIT 9303) protein is Elongation factor Ts.